A 455-amino-acid chain; its full sequence is Probable xyloglucan galactosyltransferase GT17 (455 aa).

Topologically, residues 1 to 34 (MTFNKRQVKINHWPEKNDKEKQKYSKNRETVKLT) are cytoplasmic. Residues 35 to 55 (LLTLLLLCSICFLFLTLNFPF) traverse the membrane as a helical; Signal-anchor for type II membrane protein segment. The Lumenal portion of the chain corresponds to 56–455 (TIEFTASIPR…QARDNVVVSL (400 aa)). N-linked (GlcNAc...) asparagine glycans are attached at residues Asn-70, Asn-169, Asn-230, Asn-390, and Asn-426.

It belongs to the glycosyltransferase 47 family. Expressed in roots and hypocotyls.

The protein localises to the golgi apparatus membrane. Functions in xyloglucan synthesis by adding side chains to the xylosylated glucan backbone. Involved in the galactosylation of hemicellulose xyloglucan. The polypeptide is Probable xyloglucan galactosyltransferase GT17 (Arabidopsis thaliana (Mouse-ear cress)).